An 835-amino-acid chain; its full sequence is Outer membrane usher protein FasD (835 aa).

The N-terminal stretch at 1–21 (MNKYPPLLTMLIIGIGSNAVA) is a signal peptide. Cysteine 810 and cysteine 834 form a disulfide bridge.

The protein belongs to the fimbrial export usher family.

The protein localises to the cell outer membrane. Functionally, involved in the export and assembly of the 987P fimbriae subunits across the outer membrane. The polypeptide is Outer membrane usher protein FasD (fasD) (Escherichia coli).